A 264-amino-acid chain; its full sequence is NAD kinase 1 (264 aa).

The Proton acceptor role is filled by Asp-45. Residues 45 to 46 (DG), 122 to 123 (NE), Arg-148, Asp-150, 161 to 166 (TAYNKS), and Ala-185 contribute to the NAD(+) site.

The protein belongs to the NAD kinase family. Requires a divalent metal cation as cofactor.

Its subcellular location is the cytoplasm. The enzyme catalyses NAD(+) + ATP = ADP + NADP(+) + H(+). Functionally, involved in the regulation of the intracellular balance of NAD and NADP, and is a key enzyme in the biosynthesis of NADP. Catalyzes specifically the phosphorylation on 2'-hydroxyl of the adenosine moiety of NAD to yield NADP. The chain is NAD kinase 1 from Listeria monocytogenes serotype 4b (strain F2365).